Consider the following 302-residue polypeptide: Sulfate adenylyltransferase subunit 2 (302 aa).

Belongs to the PAPS reductase family. CysD subfamily. As to quaternary structure, heterodimer composed of CysD, the smaller subunit, and CysN.

The enzyme catalyses sulfate + ATP + H(+) = adenosine 5'-phosphosulfate + diphosphate. The protein operates within sulfur metabolism; hydrogen sulfide biosynthesis; sulfite from sulfate: step 1/3. Functionally, with CysN forms the ATP sulfurylase (ATPS) that catalyzes the adenylation of sulfate producing adenosine 5'-phosphosulfate (APS) and diphosphate, the first enzymatic step in sulfur assimilation pathway. APS synthesis involves the formation of a high-energy phosphoric-sulfuric acid anhydride bond driven by GTP hydrolysis by CysN coupled to ATP hydrolysis by CysD. This chain is Sulfate adenylyltransferase subunit 2, found in Pectobacterium carotovorum subsp. carotovorum (strain PC1).